Here is a 281-residue protein sequence, read N- to C-terminus: 3-methyl-2-oxobutanoate hydroxymethyltransferase (281 aa).

D49 and D88 together coordinate Mg(2+). 3-methyl-2-oxobutanoate-binding positions include 49–50 (DS), D88, and K118. Mg(2+) is bound at residue E120. E186 (proton acceptor) is an active-site residue.

The protein belongs to the PanB family. Homodecamer; pentamer of dimers. The cofactor is Mg(2+).

It localises to the cytoplasm. The enzyme catalyses 3-methyl-2-oxobutanoate + (6R)-5,10-methylene-5,6,7,8-tetrahydrofolate + H2O = 2-dehydropantoate + (6S)-5,6,7,8-tetrahydrofolate. The protein operates within cofactor biosynthesis; (R)-pantothenate biosynthesis; (R)-pantoate from 3-methyl-2-oxobutanoate: step 1/2. Catalyzes the reversible reaction in which hydroxymethyl group from 5,10-methylenetetrahydrofolate is transferred onto alpha-ketoisovalerate to form ketopantoate. The chain is 3-methyl-2-oxobutanoate hydroxymethyltransferase from Chelativorans sp. (strain BNC1).